The primary structure comprises 267 residues: Phosphonoacetaldehyde hydrolase (267 aa).

The active-site Nucleophile is the aspartate 10. Mg(2+) contacts are provided by aspartate 10 and alanine 12. The Schiff-base intermediate with substrate role is filled by lysine 51. Aspartate 184 contributes to the Mg(2+) binding site.

This sequence belongs to the HAD-like hydrolase superfamily. PhnX family. As to quaternary structure, homodimer. Requires Mg(2+) as cofactor.

The catalysed reaction is phosphonoacetaldehyde + H2O = acetaldehyde + phosphate + H(+). Involved in phosphonate degradation. The polypeptide is Phosphonoacetaldehyde hydrolase (Paraburkholderia phytofirmans (strain DSM 17436 / LMG 22146 / PsJN) (Burkholderia phytofirmans)).